Reading from the N-terminus, the 393-residue chain is Cytotoxic and regulatory T-cell molecule (393 aa).

A signal peptide spans Met1 to Ala16. An Ig-like V-type domain is found at Ala17–Thr111. At Ala17–Gly289 the chain is on the extracellular side. 2 disulfide bridges follow: Cys36–Cys96 and Cys139–Cys194. N-linked (GlcNAc...) asparagine glycans are attached at residues Asn85 and Asn176. In terms of domain architecture, Ig-like C2-type spans Pro119–Ala208. The segment covering Asp218–Asp228 has biased composition (acidic residues). A disordered region spans residues Asp218–His280. The segment covering Ala229–Thr246 has biased composition (low complexity). A compositionally biased stretch (polar residues) spans Val247–Pro256. The span at Glu257–Thr267 shows a compositional bias: basic and acidic residues. Residues Pro270–His280 show a composition bias toward polar residues. Residues Ile290–Phe310 traverse the membrane as a helical segment. Residues Ile311–Val393 lie on the Cytoplasmic side of the membrane. The segment at Glu333–Ser356 is disordered. Positions Glu342–Gln352 are enriched in low complexity. Residues Glu390–Val393 carry the PDZ-binding motif.

It belongs to the nectin family. In terms of assembly, monomer. May form homodimer (via Ig-like V-type domain). Interacts (via Ig-like V-type domain) with CADM1 (via Ig-like V-type domain); the interaction competes with CRTAM homodimerization and CADM1 homodimerization. Interacts (via PDZ-binding motif) with SCRIB (via PDZ domain 3); the interaction promotes CRTAM and SCRIB polarization in a subset of CD4+ T-cells. In the immune system, expression is restricted to activated class-I MHC-restricted cells, including NKT, NK and CD8+ T-cells (at protein level). Transiently expressed in activated CD8+ T-cells and a subset of activated CD4+ T-cells (at protein level). Expressed in activated intestinal T-cells, specifically intraepithelial CD4+ CD8+ T-cells, intraepithelial CD4+ T-cells and, CD8+ T-cells in the intestine epithelium, lamina propria, Peyer's Patches and mesenteric lymph nodes. Also expressed in spleen, brain and testis.

Its subcellular location is the cell membrane. In terms of biological role, mediates heterophilic cell-cell adhesion which regulates the activation, differentiation and tissue retention of various T-cell subsets. Interaction with CADM1 promotes natural killer (NK) cell cytotoxicity and IFNG/interferon-gamma secretion by CD8+ T-cells in vitro as well as NK cell-mediated rejection of tumors expressing CADM1 in vivo. Regulates CD8+ T-cell proliferation in response to T-cell receptor (TCR) activation. Appears to be dispensable for CD8+ T-cell-mediated cytotoxicity. Interaction with SCRIB promotes the late phase of cellular polarization of a subset of CD4+ T-cells, which in turn regulates TCR-mediated proliferation and IFNG, IL17 and IL22 production. By interacting with CADM1 on CD8+ dendritic cells, regulates the retention of activated CD8+ T-cells within the draining lymph node. Required for the intestinal retention of intraepithelial CD4+ CD8+ T-cells and, to a lesser extent, intraepithelial and lamina propria CD8+ T-cells and CD4+ T-cells. Interaction with CADM1 promotes the adhesion to gut-associated CD103+ dendritic cells, which may facilitate the expression of gut-homing and adhesion molecules on T-cells and the conversion of CD4+ T-cells into CD4+ CD8+ T-cells. In Mus musculus (Mouse), this protein is Cytotoxic and regulatory T-cell molecule.